The sequence spans 228 residues: MAKSKAYRAAAEKIDLTKAYTASEAVELARETGSSKFDSTVEVALKLGVDPRKADQMVRGTVILPHGTGKTARVIVFATGPAAEAAIAAGADEVGGDELIEKVAGGYTSFDSAVSTPELMGKVGRLGKVLGPRGLMPNPKTGTVTPDVARAVSDIKGGKIEFRVDKHANVHFVVGKASFSPEQLSENVGAALEEIVRLKPSSSKGRYVQKATVSTTFGPGIPVDVNSI.

Belongs to the universal ribosomal protein uL1 family. As to quaternary structure, part of the 50S ribosomal subunit.

Binds directly to 23S rRNA. The L1 stalk is quite mobile in the ribosome, and is involved in E site tRNA release. Its function is as follows. Protein L1 is also a translational repressor protein, it controls the translation of the L11 operon by binding to its mRNA. This Clavibacter sepedonicus (Clavibacter michiganensis subsp. sepedonicus) protein is Large ribosomal subunit protein uL1.